Reading from the N-terminus, the 388-residue chain is Homoserine O-acetyltransferase (388 aa).

An AB hydrolase-1 domain is found at 55 to 354; sequence PIVLIEHALT…PTGHDGFLIE (300 aa). The active-site Nucleophile is the S150. Residue R220 participates in substrate binding. Residues D318 and H348 contribute to the active site. Residue D349 participates in substrate binding.

It belongs to the AB hydrolase superfamily. MetX family. As to quaternary structure, homodimer.

It is found in the cytoplasm. The catalysed reaction is L-homoserine + acetyl-CoA = O-acetyl-L-homoserine + CoA. Its pathway is amino-acid biosynthesis; L-methionine biosynthesis via de novo pathway; O-acetyl-L-homoserine from L-homoserine: step 1/1. Transfers an acetyl group from acetyl-CoA to L-homoserine, forming acetyl-L-homoserine. The polypeptide is Homoserine O-acetyltransferase (Corynebacterium urealyticum (strain ATCC 43042 / DSM 7109)).